Consider the following 209-residue polypeptide: Heat shock protein beta-1 (209 aa).

R12 is modified (omega-N-methylarginine). S13 bears the Phosphoserine mark. S15 is modified (phosphoserine; by MAPKAPK2 and MAPKAPK3). Phosphoserine is present on S27. An interaction with TGFB1I1 region spans residues 74–209 (APAYSRALSR…AGKSEQSGAK (136 aa)). One can recognise a sHSP domain in the interval 80–188 (ALSRQLSSGV…QSAEITIPVT (109 aa)). S82 and S86 each carry phosphoserine; by MAPKAPK2, MAPKAPK3 and MAPKAPK5. A phosphoserine mark is found at S87, S90, and S102. K127 bears the N6-acetyllysine mark. T178 carries the post-translational modification Phosphothreonine. A phosphoserine mark is found at S180 and S203.

It belongs to the small heat shock protein (HSP20) family. Homooligomer. Homodimer; becomes monomeric upon activation. Heterooligomer; with HSPB6. Associates with alpha- and beta-tubulin. Interacts with TGFB1I1. Interacts with CRYAB. Interacts with HSPB8. Interacts with HSPBAP1. In terms of processing, phosphorylated upon exposure to protein kinase C activators and heat shock. Phosphorylation by MAPKAPK2 and MAPKAPK3 in response to stress dissociates HSPB1 from large small heat-shock protein (sHsps) oligomers and impairs its chaperone activity and ability to protect against oxidative stress effectively. Phosphorylation by MAPKAPK5 in response to PKA stimulation induces F-actin rearrangement.

The protein resides in the cytoplasm. Its subcellular location is the nucleus. It is found in the cytoskeleton. It localises to the spindle. Functionally, small heat shock protein which functions as a molecular chaperone probably maintaining denatured proteins in a folding-competent state. Plays a role in stress resistance and actin organization. Through its molecular chaperone activity may regulate numerous biological processes including the phosphorylation and the axonal transport of neurofilament proteins. The sequence is that of Heat shock protein beta-1 (HSPB1) from Canis lupus familiaris (Dog).